A 626-amino-acid polypeptide reads, in one-letter code: Pheromone B alpha 3 receptor (626 aa).

7 consecutive transmembrane segments (helical) span residues 8–28, 36–56, 70–90, 113–133, 163–183, 208–228, and 271–291; these read LFPT…PWHL, CFFM…SIVW, ISIR…LCII, IIID…MQYI, IWPV…LIEF, LMAL…FVIV, and ELTR…FGFA. Disordered regions lie at residues 363 to 409, 481 to 509, 524 to 549, and 571 to 626; these read KQYT…SSPI, ATFT…SSSA, STTD…RLPS, and QDVA…RASV. Low complexity predominate over residues 376–391; the sequence is SSSGFSSSESTRFGSS. The span at 574–606 shows a compositional bias: low complexity; sequence ATGTAAPTTTAPAPASTTIAPATTTATAPTTTA.

The protein belongs to the G-protein coupled receptor 4 family.

It is found in the membrane. Its function is as follows. Receptor for the BAP3 pheromone, a prenylated mating factor. This is Pheromone B alpha 3 receptor (BAR3) from Schizophyllum commune (strain H4-8 / FGSC 9210) (Split gill fungus).